The primary structure comprises 1036 residues: Histidine kinase 3 (1036 aa).

Over 1 to 8 (MSLFHVLG) the chain is Extracellular. A helical membrane pass occupies residues 9 to 29 (FGVKIGHLFWMLCCWFVSWFV). Over 30–94 (DNGIEDKSGL…VKFNKAWWRK (65 aa)) the chain is Cytoplasmic. The helical transmembrane segment at 95–115 (LVVVWVVFWVLVSIWTFWYFS) threads the bilayer. Residues 116 to 399 (SQAMEKRKET…CRFKQKPPWP (284 aa)) lie on the Extracellular side of the membrane. One can recognise a CHASE domain in the interval 163–389 (IPSAIDQRTF…GDPLRKHEMR (227 aa)). A helical transmembrane segment spans residues 400–420 (VLSMVTSFGILVIALLVAHII). Topologically, residues 421-1036 (HATVSRIHKV…FFNSPSDTES (616 aa)) are cytoplasmic. Positions 457 to 723 (TVSHEIRTPM…TFTFTAVFSN (267 aa)) constitute a Histidine kinase domain. Residue H460 is modified to Phosphohistidine; by autocatalysis. Response regulatory domains follow at residues 746-865 (KAVV…QRGL) and 891-1028 (KILI…SRFF). Residue D941 is modified to 4-aspartylphosphate.

As to quaternary structure, interacts with AHK2, AHK4, AHP1, AHP2, AHP3, AHP5 and At5g43560. Autophosphorylated predominantly on His residues. Activation probably requires a transfer of a phosphate group between a His in the transmitter domain and an Asp of the receiver domain. In terms of tissue distribution, mostly expressed in leaves and flowers, and, to a lower extent, in roots, stems, and siliques, especially in the vascular tissues. Present in seedlings.

The protein resides in the cell membrane. It localises to the endoplasmic reticulum membrane. It catalyses the reaction ATP + protein L-histidine = ADP + protein N-phospho-L-histidine.. Activated by cytokinins to initiate phosphorelay signaling. This cytokinin-mediated activation is repressed by the trans-zeatin antagonists 6-(2-hydroxy-3-methylbenzylamino)purine (PI-55) and 6-(2,5-Dihydroxybenzylamino)purine (LGR-991). Functionally, cytokinins (CK) receptor related to bacterial two-component regulators. Functions as a histidine kinase and transmits the stress signal to a downstream MAPK cascade. This protein undergoes an ATP-dependent autophosphorylation at a conserved histidine residue in the kinase core, and a phosphoryl group is then transferred to a conserved aspartate residue in the receiver domain. In the presence of cytokinin, feeds phosphate to phosphorelay-integrating histidine phosphotransfer protein (HPt) and activates subsequent cascade. Involved in meristems establishment in seedlings. Redundant negative regulator of drought and salt stress responses and abscisic acid (ABA) signaling. Together with AHK2, plays a negative regulatory role in cold stress signaling via inhibition of ABA response, occurring independently of the cold acclimation pathway. Redundant positive regulator of cytokinin signaling that regulates many developmental processes including seed germination, cell division, seed size, chlorophyll retention during leaf senescence, root repression and shoot promotion. Can interact with isoprenoid-type cytokinins trans-zeatin (tZ and tZR), cis-zeatin (cZ), dihydrozeatin (DZ), buta-2,3-dienyladenine (HA-8), penta-2,3-dienyladenine (HA-1), 4-methyl-penta-2,3-dienyladenine (HA-10), 4-hydroxy-2-butynyladenine (RM1), 2-propynyladenine (RM3), 2-butynyladenine (RM6), and cytokinin ribosides and ribotides. Together with AHK4, involved in the cytokinin-dependent responses to Pi starvation and sucrose stresses. Promotes cytokinin-mediated leaf longevity through a specific phosphorylation of the response regulator ARR2. Involved in alkamides (e.g. N-isobutyl decanamide) and N-acylethanolamides (NAE) signaling that control meristematic activity and differentiation processes during plant development. Contributes to vascular bundle formation and secondary growth in a cytokinin-dependent manner, probably by promoting the maintenance of mitotic activity and/or identity of procambial cells. Plays a role in the cytokinin-mediated repression of the iron uptake pathway. Required by the cytokinin-dependent flower development regulation pathway. This is Histidine kinase 3 (AHK3) from Arabidopsis thaliana (Mouse-ear cress).